Here is a 274-residue protein sequence, read N- to C-terminus: Penicillin-insensitive murein endopeptidase (274 aa).

A signal peptide spans 1 to 19; it reads MKKTALALLALLVSSASLA. 3 disulfides stabilise this stretch: Cys44–Cys265, Cys187–Cys235, and Cys216–Cys223. Positions 110, 113, 120, 147, 150, and 211 each coordinate Zn(2+). A disordered region spans residues 225–274; it reads DQPLPPPGDGCGAELQSWFEPPEPGTTKPEKKTPPPLPPSCQALLDEHVL.

This sequence belongs to the peptidase M74 family. As to quaternary structure, dimer. Requires Zn(2+) as cofactor.

It localises to the periplasm. Functionally, murein endopeptidase that cleaves the D-alanyl-meso-2,6-diamino-pimelyl amide bond that connects peptidoglycan strands. Likely plays a role in the removal of murein from the sacculus. The chain is Penicillin-insensitive murein endopeptidase from Citrobacter koseri (strain ATCC BAA-895 / CDC 4225-83 / SGSC4696).